Reading from the N-terminus, the 344-residue chain is Hydrophobic dipeptide epimerase (344 aa).

Substrate-binding positions include threonine 126 and 151 to 153; that span reads KIK. Mg(2+) contacts are provided by aspartate 184, glutamate 210, and aspartate 235. Substrate-binding positions include lysine 257 and 307 to 309; that span reads DLD.

Belongs to the mandelate racemase/muconate lactonizing enzyme family. The cofactor is Mg(2+).

In terms of biological role, dipeptide epimerase with a preference for hydrophobic substrates. Catalyzes the epimerization of L-Ala-L-Thr, L-Ala-L-Met, L-Ala-L-His, L-Ala-L-Phe, L-Ala-L-Tyr, L-Ala-L-Trp, L-Ile-L-Ala, L-Ile-L-Ser, L-Ile-L-Met, L-Ile-L-His, L-Ile-L-Phe, L-Ile-L-Tyr, L-Ile-L-Trp, L-Phe-L-Met, L-Phe-L-His, L-Phe-L-Phe, L-Phe-L-Tyr, L-Phe-L-Trp, L-Phe-L-Ser, L-Phe-L-Thr and L-Phe-L-Lys (in vitro). The chain is Hydrophobic dipeptide epimerase from Roseobacter litoralis (strain ATCC 49566 / DSM 6996 / JCM 21268 / NBRC 15278 / OCh 149).